We begin with the raw amino-acid sequence, 110 residues long: UPF0060 membrane protein Pcryo_1341 (110 aa).

Transmembrane regions (helical) follow at residues 7 to 27, 33 to 53, 63 to 83, and 87 to 107; these read VGLF…PYLW, SIWL…LLTL, AAYG…VDGI, and TWDI…MFAP.

Belongs to the UPF0060 family.

It is found in the cell inner membrane. This chain is UPF0060 membrane protein Pcryo_1341, found in Psychrobacter cryohalolentis (strain ATCC BAA-1226 / DSM 17306 / VKM B-2378 / K5).